The primary structure comprises 208 residues: Glutathione S-transferase 1 (208 aa).

The 80-residue stretch at 1 to 80 (MDFYYLPGSA…YLVEKYGKTD (80 aa)) folds into the GST N-terminal domain. Glutathione contacts are provided by residues serine 9, 50–52 (HTI), and 64–66 (ESR). In terms of domain architecture, GST C-terminal spans 86–207 (CPKKRAVINQ…AGCLEFKKYF (122 aa)).

This sequence belongs to the GST superfamily. Theta family. As to quaternary structure, homodimer.

The catalysed reaction is RX + glutathione = an S-substituted glutathione + a halide anion + H(+). Its function is as follows. Conjugation of reduced glutathione to a wide number of exogenous and endogenous hydrophobic electrophiles. This is Glutathione S-transferase 1 (Gst1) from Musca domestica (House fly).